We begin with the raw amino-acid sequence, 646 residues long: Altered inheritance of mitochondria protein 9, mitochondrial (646 aa).

The N-terminal 34 residues, 1–34 (MLRIPSRIGSRQVLACAGRNLKCGSVMRHISRRN), are a transit peptide targeting the mitochondrion.

Belongs to the AIM9 family.

It localises to the mitochondrion. The sequence is that of Altered inheritance of mitochondria protein 9, mitochondrial (AIM9) from Candida glabrata (strain ATCC 2001 / BCRC 20586 / JCM 3761 / NBRC 0622 / NRRL Y-65 / CBS 138) (Yeast).